We begin with the raw amino-acid sequence, 629 residues long: MGYNAGSYDVIVIGAGHAGCEAGLAAARMGSKTLMLTINLDMVAFMPCNPSVGGPAKGIVVREIDALGGEMGRNIDKTHIQMRMLNTGKGPAVRALRAQADKFSYQHELKKTIEETPNLTLFQGMVERLIVEDGECKGVITQAGAEYTAKTVVITTGTFLRGEIIMGDLKYSSGPNNQQPSITLSEHLEELGFDLVRFKTGTPPRVNSNTIDYSKTEIQPGDDKPRAFSFETTKFIMDQIPCWLTYTSTETHRLIDENLHRSAMYSGMIKGTGPRYCPSIEDKVVRFNDKPRHQIFLEPEGRNTQEVYVQGLSTSLPEDVQRDMLRTIPGLENVEMMRTGYAIEYDAIVPTQLWPTLETKKIKNLYTAGQINGTSGYEEAAGQGLMAGINAACRSLGKKEVILGREDAYIGVLIDDLVTKGTNEPYRLLTSRAEYRLLLRHDNADLRLTEIGHEIGLIKEERYERFTNKKLQIEQEKERLSSIIIKPRPEVQELIRNIGGSELKDGIRASDLLRRPEMTYEHIHLLVPSEVELSDEVTEQVEIQIKYEGYIEKSLQQVERMKKMESKKIPVDIDYDAISSLASEARQKLKDVRPLSVGQASRISGVNPADISILLVYIEQGKIARVSNQ.

FAD is bound by residues 14–19, Val-126, and Ser-181; that span reads GAGHAG. Residue 273–287 coordinates NAD(+); it reads GPRYCPSIEDKVVRF. Gln-370 contacts FAD.

The protein belongs to the MnmG family. As to quaternary structure, homodimer. Heterotetramer of two MnmE and two MnmG subunits. FAD serves as cofactor.

It is found in the cytoplasm. Functionally, NAD-binding protein involved in the addition of a carboxymethylaminomethyl (cmnm) group at the wobble position (U34) of certain tRNAs, forming tRNA-cmnm(5)s(2)U34. The polypeptide is tRNA uridine 5-carboxymethylaminomethyl modification enzyme MnmG (Bacillus cereus (strain ATCC 10987 / NRS 248)).